The sequence spans 279 residues: MVDSDSARLPYFNASPAEVRRLCRAGESGPVTAGMAAGYIQANIVMLPASLADAFHEFCLRNPKPCPLVGMSRPGDYRLPSLGADLDLRTDLPLYRVWRDGNMVAETGDIRDQWRDDLVTFALGCSFSFENALTACDVPMRHLQLGRGVPVYRTNIACTPVGPFAGPVVVSMRPFRSHHAIRAVQISSLIPLAHGAPIQIGFPEEIGIADIDSPDYGDPTEVADDELPVFWACGVTPQAVLAASKPEFAITHAPGAMLVTDMPIEGYEDLVASHRGRII.

This sequence belongs to the D-glutamate cyclase family.

The protein is Putative hydro-lyase GDI0188/Gdia_2258 of Gluconacetobacter diazotrophicus (strain ATCC 49037 / DSM 5601 / CCUG 37298 / CIP 103539 / LMG 7603 / PAl5).